We begin with the raw amino-acid sequence, 200 residues long: 3-isopropylmalate dehydratase small subunit (200 aa).

This sequence belongs to the LeuD family. LeuD type 1 subfamily. In terms of assembly, heterodimer of LeuC and LeuD.

The enzyme catalyses (2R,3S)-3-isopropylmalate = (2S)-2-isopropylmalate. It functions in the pathway amino-acid biosynthesis; L-leucine biosynthesis; L-leucine from 3-methyl-2-oxobutanoate: step 2/4. Catalyzes the isomerization between 2-isopropylmalate and 3-isopropylmalate, via the formation of 2-isopropylmaleate. The chain is 3-isopropylmalate dehydratase small subunit from Actinobacillus pleuropneumoniae serotype 3 (strain JL03).